The chain runs to 943 residues: Isoleucine--tRNA ligase (943 aa).

The 'HIGH' region motif lies at proline 58–histidine 68. Residue glutamate 567 coordinates L-isoleucyl-5'-AMP. The short motif at lysine 608–serine 612 is the 'KMSKS' region element. Lysine 611 is a binding site for ATP. Zn(2+) contacts are provided by cysteine 906, cysteine 909, cysteine 926, and cysteine 929.

The protein belongs to the class-I aminoacyl-tRNA synthetase family. IleS type 1 subfamily. Monomer. The cofactor is Zn(2+).

The protein localises to the cytoplasm. The catalysed reaction is tRNA(Ile) + L-isoleucine + ATP = L-isoleucyl-tRNA(Ile) + AMP + diphosphate. In terms of biological role, catalyzes the attachment of isoleucine to tRNA(Ile). As IleRS can inadvertently accommodate and process structurally similar amino acids such as valine, to avoid such errors it has two additional distinct tRNA(Ile)-dependent editing activities. One activity is designated as 'pretransfer' editing and involves the hydrolysis of activated Val-AMP. The other activity is designated 'posttransfer' editing and involves deacylation of mischarged Val-tRNA(Ile). The protein is Isoleucine--tRNA ligase of Pseudomonas paraeruginosa (strain DSM 24068 / PA7) (Pseudomonas aeruginosa (strain PA7)).